The chain runs to 235 residues: Large ribosomal subunit protein uL1 (235 aa).

The protein belongs to the universal ribosomal protein uL1 family. As to quaternary structure, part of the 50S ribosomal subunit.

Functionally, binds directly to 23S rRNA. The L1 stalk is quite mobile in the ribosome, and is involved in E site tRNA release. Protein L1 is also a translational repressor protein, it controls the translation of the L11 operon by binding to its mRNA. The polypeptide is Large ribosomal subunit protein uL1 (Prochlorococcus marinus (strain MIT 9313)).